The primary structure comprises 361 residues: G-protein coupled receptor 52 (361 aa).

Residues 1–44 (MNESRWTEWRILNMSSSIVNVSEHHSCPLGFGHYSVEDVCIFET) are Extracellular-facing. 3 N-linked (GlcNAc...) asparagine glycosylation sites follow: Asn2, Asn13, and Asn20. A helical membrane pass occupies residues 45 to 65 (VVIVLLTFLIISGNLTVIFVF). Residues 66–81 (HCAPLLHHYTTSYFIQ) lie on the Cytoplasmic side of the membrane. Residues 82–102 (TMAYADLLVGVTCLVPTLSLL) form a helical membrane-spanning segment. At 103-115 (HYSTGVHESLTCQ) the chain is on the extracellular side. Cys114 and Cys193 form a disulfide bridge. A helical transmembrane segment spans residues 116–136 (VFGYIISVLKSVSMACLACIS). At 137-159 (VDRYLAITKPLSYNQLVTPCRLR) the chain is on the cytoplasmic side. Residues 160 to 180 (ICIIMIWIYSCLIFLPSFFGW) form a helical membrane-spanning segment. Residues 181–205 (GKPGYHGDIFEWCATSWLTSAYFTC) lie on the Extracellular side of the membrane. Residues 206–226 (FIVCLLYAPAALVVCFTYFHI) traverse the membrane as a helical segment. Residues 227 to 265 (FKICRQHTKEINDRRARFPSHEVEASREAGHSPDRRYAM) lie on the Cytoplasmic side of the membrane. The helical transmembrane segment at 266–286 (VLFRITSVFYMLWLPYIIYFL) threads the bilayer. The Extracellular segment spans residues 287–296 (LESSRVLDNP). The chain crosses the membrane as a helical span at residues 297–317 (TLSFLTTWLAISNSFCNCVIY). At 318–361 (SLSNSVFRLGLRRLSETMCTSCVCAKDQEAQDPKPRRRANSCSI) the chain is on the cytoplasmic side.

The protein belongs to the G-protein coupled receptor 1 family. In terms of tissue distribution, expressed in brain, especially in striatum. Expressed in the striatum, nucleus accumbens, and lateral globus pallidus.

Its subcellular location is the cell membrane. G- protein coupled receptor activated by antipsychotics reserpine leading to an increase in intracellular cAMP and its internalization. May play a role in locomotor activity through modulation of dopamine, NMDA and ADORA2A-induced locomotor activity. These behavioral changes are accompanied by modulation of the dopamine receptor signaling pathway in striatum. Modulates HTT level via cAMP-dependent but PKA independent mechanisms throught activation of RAB39B that translocates HTT to the endoplasmic reticulum, thus avoiding proteasome degradation. This Mus musculus (Mouse) protein is G-protein coupled receptor 52.